Here is a 272-residue protein sequence, read N- to C-terminus: Ribonuclease HII (272 aa).

The RNase H type-2 domain occupies 30-221 (GPVAGVDEVG…VRRAAEATGV (192 aa)). A divalent metal cation contacts are provided by Asp36, Glu37, and Asp130.

The protein belongs to the RNase HII family. It depends on Mn(2+) as a cofactor. Requires Mg(2+) as cofactor.

Its subcellular location is the cytoplasm. The catalysed reaction is Endonucleolytic cleavage to 5'-phosphomonoester.. In terms of biological role, endonuclease that specifically degrades the RNA of RNA-DNA hybrids. The polypeptide is Ribonuclease HII (Mycolicibacterium smegmatis (strain ATCC 700084 / mc(2)155) (Mycobacterium smegmatis)).